Here is a 399-residue protein sequence, read N- to C-terminus: Argonaute-binding protein 1 (399 aa).

Component of the argonaute siRNA chaperone (ARC) complex composed of ago1, arb1 and arb2. Interacts with ago1.

It localises to the nucleus. The protein resides in the cytoplasm. In terms of biological role, component of the argonaute siRNA chaperone (ARC) complex which is required for histone H3K9 methylation, heterochromatin assembly and siRNA generation. The ARC complex contains mostly double-stranded siRNA. Inhibits the release of the siRNA passenger strand from ago1 together with arb2. Inhibits the slicer activity of ago1. Required for swi6 localization to the centromeric repeats. This chain is Argonaute-binding protein 1 (arb1), found in Schizosaccharomyces pombe (strain 972 / ATCC 24843) (Fission yeast).